Here is a 229-residue protein sequence, read N- to C-terminus: Peptidase E (229 aa).

Active-site charge relay system residues include serine 120, aspartate 135, and histidine 157.

It belongs to the peptidase S51 family.

It is found in the cytoplasm. The catalysed reaction is Dipeptidase E catalyzes the hydrolysis of dipeptides Asp-|-Xaa. It does not act on peptides with N-terminal Glu, Asn or Gln, nor does it cleave isoaspartyl peptides.. Its function is as follows. Hydrolyzes dipeptides containing N-terminal aspartate residues. May play a role in allowing the cell to use peptide aspartate to spare carbon otherwise required for the synthesis of the aspartate family of amino acids. This Salmonella typhimurium (strain LT2 / SGSC1412 / ATCC 700720) protein is Peptidase E (pepE).